We begin with the raw amino-acid sequence, 352 residues long: Probable dual-specificity RNA methyltransferase RlmN (352 aa).

Catalysis depends on Glu92, which acts as the Proton acceptor. The 231-residue stretch at Tyr98–Asp328 folds into the Radical SAM core domain. A disulfide bridge connects residues Cys105 and Cys333. Cys112, Cys116, and Cys119 together coordinate [4Fe-4S] cluster. Residues Gly159–Glu160, Ser191, Ser214–His216, and Asn290 each bind S-adenosyl-L-methionine. Cys333 acts as the S-methylcysteine intermediate in catalysis.

Belongs to the radical SAM superfamily. RlmN family. Requires [4Fe-4S] cluster as cofactor.

Its subcellular location is the cytoplasm. The catalysed reaction is adenosine(2503) in 23S rRNA + 2 reduced [2Fe-2S]-[ferredoxin] + 2 S-adenosyl-L-methionine = 2-methyladenosine(2503) in 23S rRNA + 5'-deoxyadenosine + L-methionine + 2 oxidized [2Fe-2S]-[ferredoxin] + S-adenosyl-L-homocysteine. The enzyme catalyses adenosine(37) in tRNA + 2 reduced [2Fe-2S]-[ferredoxin] + 2 S-adenosyl-L-methionine = 2-methyladenosine(37) in tRNA + 5'-deoxyadenosine + L-methionine + 2 oxidized [2Fe-2S]-[ferredoxin] + S-adenosyl-L-homocysteine. Specifically methylates position 2 of adenine 2503 in 23S rRNA and position 2 of adenine 37 in tRNAs. In Alkaliphilus metalliredigens (strain QYMF), this protein is Probable dual-specificity RNA methyltransferase RlmN.